We begin with the raw amino-acid sequence, 160 residues long: 2-C-methyl-D-erythritol 2,4-cyclodiphosphate synthase (160 aa).

Asp-8 and His-10 together coordinate a divalent metal cation. Residues 8–10 (DVH) and 34–35 (HS) contribute to the 4-CDP-2-C-methyl-D-erythritol 2-phosphate site. An a divalent metal cation-binding site is contributed by His-42. 4-CDP-2-C-methyl-D-erythritol 2-phosphate contacts are provided by residues 56 to 58 (DIG), 61 to 65 (FPDTD), 100 to 106 (AQAPKML), 132 to 135 (TTTE), Phe-139, and Arg-142.

Belongs to the IspF family. In terms of assembly, homotrimer. The cofactor is a divalent metal cation.

It catalyses the reaction 4-CDP-2-C-methyl-D-erythritol 2-phosphate = 2-C-methyl-D-erythritol 2,4-cyclic diphosphate + CMP. It participates in isoprenoid biosynthesis; isopentenyl diphosphate biosynthesis via DXP pathway; isopentenyl diphosphate from 1-deoxy-D-xylulose 5-phosphate: step 4/6. Involved in the biosynthesis of isopentenyl diphosphate (IPP) and dimethylallyl diphosphate (DMAPP), two major building blocks of isoprenoid compounds. Catalyzes the conversion of 4-diphosphocytidyl-2-C-methyl-D-erythritol 2-phosphate (CDP-ME2P) to 2-C-methyl-D-erythritol 2,4-cyclodiphosphate (ME-CPP) with a corresponding release of cytidine 5-monophosphate (CMP). The polypeptide is 2-C-methyl-D-erythritol 2,4-cyclodiphosphate synthase (Proteus mirabilis (strain HI4320)).